Consider the following 307-residue polypeptide: B3 domain-containing protein At5g18000 (307 aa).

The segment at residues 20–115 (FFKILRREDH…CFNVTIFEAD (96 aa)) is a DNA-binding region (TF-B3 1). 2 disordered regions span residues 122-141 (PRKTITSSSGRNKREERKSI) and 151-209 (IESW…SEAG). The segment covering 166-177 (ESTSGRLTQKQE) has biased composition (polar residues). Positions 178–192 (LNLRKKEADKTEKSK) are enriched in basic and acidic residues. The TF-B3 2 DNA-binding region spans 214–307 (IPEFKLTIKK…TEMRVKVSKE (94 aa)).

The protein resides in the nucleus. This is B3 domain-containing protein At5g18000 from Arabidopsis thaliana (Mouse-ear cress).